Here is a 592-residue protein sequence, read N- to C-terminus: UvrABC system protein C (592 aa).

Residues 14–91 enclose the GIY-YIG domain; sequence KKPGCYLWKN…IKKHKPRYNI (78 aa). Residues 197 to 232 form the UVR domain; sequence DQVLKDLKEKESIASEKFDFEQAKKYLDLQKAINLI.

The protein belongs to the UvrC family. In terms of assembly, interacts with UvrB in an incision complex.

The protein resides in the cytoplasm. Its function is as follows. The UvrABC repair system catalyzes the recognition and processing of DNA lesions. UvrC both incises the 5' and 3' sides of the lesion. The N-terminal half is responsible for the 3' incision and the C-terminal half is responsible for the 5' incision. The sequence is that of UvrABC system protein C from Mycoplasmoides gallisepticum (strain R(low / passage 15 / clone 2)) (Mycoplasma gallisepticum).